Here is a 469-residue protein sequence, read N- to C-terminus: TKASVGFKAGVKDYKLTYYTPDYVTKDTDILAAFRVTPQPGVPPEEAGAAVAAESSTGTWTTVWTDGLTSLDRYKGRCYNIEPVAGEEHQYICYVAYPLDLFEEGSVTNMFTSIVGNVFGFKALRALRLEDLRIPPAYSKTFQGPPHGIQVERDKLNKYGRPLLGCTIKPKLGLSAKNYGRAVYECLRGGLDFTKDDENVNSQPFMRWRDRFLFCAERIYKSQAETGEIKGHYLNATAGTCEEMIKRAVFARELGVPIVMHDYLTGGFTANTSLAHYCRDNGLLLHIHRAMHAVIDRQKNHGIHFRVLAKALRMSGGDHIHAGTVVGKLEGERDITLGFVDLLRDDFIEKDRSRGIYFTQDWVSLPGVLPVASGGIHVWHMPALTEIFGDDSVLQFGGGTLGHPWGNAPGAVANRVALEACVQARNEGRDLAREGNEIIREASKWSPELAAACEVWKAIKFEFPAMDTL.

The residue at position 8 (lysine 8) is an N6,N6,N6-trimethyllysine. Asparagine 117 and threonine 167 together coordinate substrate. Lysine 169 (proton acceptor) is an active-site residue. Lysine 171 contacts substrate. Residues lysine 195, aspartate 197, and glutamate 198 each coordinate Mg(2+). The residue at position 195 (lysine 195) is an N6-carboxylysine. Catalysis depends on histidine 288, which acts as the Proton acceptor. Positions 289, 321, and 373 each coordinate substrate.

Belongs to the RuBisCO large chain family. Type I subfamily. As to quaternary structure, heterohexadecamer of 8 large chains and 8 small chains; disulfide-linked. The disulfide link is formed within the large subunit homodimers. Mg(2+) serves as cofactor. Post-translationally, the disulfide bond which can form in the large chain dimeric partners within the hexadecamer appears to be associated with oxidative stress and protein turnover.

The protein localises to the plastid. It is found in the chloroplast. The enzyme catalyses 2 (2R)-3-phosphoglycerate + 2 H(+) = D-ribulose 1,5-bisphosphate + CO2 + H2O. It catalyses the reaction D-ribulose 1,5-bisphosphate + O2 = 2-phosphoglycolate + (2R)-3-phosphoglycerate + 2 H(+). Its function is as follows. RuBisCO catalyzes two reactions: the carboxylation of D-ribulose 1,5-bisphosphate, the primary event in carbon dioxide fixation, as well as the oxidative fragmentation of the pentose substrate in the photorespiration process. Both reactions occur simultaneously and in competition at the same active site. The chain is Ribulose bisphosphate carboxylase large chain from Coleonema pulchellum (Confetti bush).